We begin with the raw amino-acid sequence, 329 residues long: Galactosylgalactosylxylosylprotein 3-beta-glucuronosyltransferase 2 (329 aa).

Topologically, residues 1 to 2 are cytoplasmic; that stretch reads MK. A helical; Signal-anchor for type II membrane protein membrane pass occupies residues 3 to 23; it reads SALFSRFFILLPWILIVIIML. Residues 24 to 329 lie on the Lumenal side of the membrane; that stretch reads DVDTRRPAPP…YRLDTVKIEV (306 aa). The tract at residues 45-87 is disordered; that stretch reads VGRGGARLPPRRGGPDSGPGRGWEKRNESRPHARPRPEPPLPT. Positions 66-81 are enriched in basic and acidic residues; it reads GWEKRNESRPHARPRP. Asn71 carries an N-linked (GlcNAc...) asparagine glycan. Residues 93–95, Asp124, Arg161, Arg166, and 191–193 each bind UDP-alpha-D-glucuronate; these read PTY and DDD. Mn(2+) is bound at residue Asp193. The interaction with galactose moiety of substrate glycoprotein stretch occupies residues 240–249; the sequence is WRADRPFAID. Glu279 acts as the Proton donor/acceptor in catalysis. Asn298 carries an N-linked (GlcNAc...) asparagine glycan. Position 306–308 (306–308) interacts with UDP-alpha-D-glucuronate; the sequence is HTR.

The protein belongs to the glycosyltransferase 43 family. In terms of assembly, homodimer. Mn(2+) is required as a cofactor.

It localises to the golgi apparatus membrane. The enzyme catalyses 3-O-(beta-D-galactosyl-(1-&gt;3)-beta-D-galactosyl-(1-&gt;4)-beta-D-xylosyl)-L-seryl-[protein] + UDP-alpha-D-glucuronate = 3-O-(beta-D-GlcA-(1-&gt;3)-beta-D-Gal-(1-&gt;3)-beta-D-Gal-(1-&gt;4)-beta-D-Xyl)-L-seryl-[protein] + UDP + H(+). It functions in the pathway protein modification; protein glycosylation. Involved in the biosynthesis of L2/HNK-1 carbohydrate epitope on both glycolipids and glycoproteins. This Canis lupus familiaris (Dog) protein is Galactosylgalactosylxylosylprotein 3-beta-glucuronosyltransferase 2 (B3GAT2).